We begin with the raw amino-acid sequence, 58 residues long: UPF0391 membrane protein Shew185_1413 (58 aa).

The next 2 helical transmembrane spans lie at 6 to 26 (LVFLVVAVIAGLFGFTGIAGA) and 28 to 48 (AGIAKIIFFLFIVLLVISLLI).

Belongs to the UPF0391 family.

It localises to the cell membrane. The protein is UPF0391 membrane protein Shew185_1413 of Shewanella baltica (strain OS185).